Here is a 474-residue protein sequence, read N- to C-terminus: Bifunctional protein HldE (474 aa).

The ribokinase stretch occupies residues methionine 1–glutamate 318. Residue asparagine 194–glutamate 197 participates in ATP binding. The active site involves aspartate 263. A cytidylyltransferase region spans residues phenylalanine 343 to glycine 474.

This sequence in the N-terminal section; belongs to the carbohydrate kinase PfkB family. The protein in the C-terminal section; belongs to the cytidylyltransferase family. Homodimer.

The catalysed reaction is D-glycero-beta-D-manno-heptose 7-phosphate + ATP = D-glycero-beta-D-manno-heptose 1,7-bisphosphate + ADP + H(+). It catalyses the reaction D-glycero-beta-D-manno-heptose 1-phosphate + ATP + H(+) = ADP-D-glycero-beta-D-manno-heptose + diphosphate. The protein operates within nucleotide-sugar biosynthesis; ADP-L-glycero-beta-D-manno-heptose biosynthesis; ADP-L-glycero-beta-D-manno-heptose from D-glycero-beta-D-manno-heptose 7-phosphate: step 1/4. It functions in the pathway nucleotide-sugar biosynthesis; ADP-L-glycero-beta-D-manno-heptose biosynthesis; ADP-L-glycero-beta-D-manno-heptose from D-glycero-beta-D-manno-heptose 7-phosphate: step 3/4. Functionally, catalyzes the phosphorylation of D-glycero-D-manno-heptose 7-phosphate at the C-1 position to selectively form D-glycero-beta-D-manno-heptose-1,7-bisphosphate. Catalyzes the ADP transfer from ATP to D-glycero-beta-D-manno-heptose 1-phosphate, yielding ADP-D-glycero-beta-D-manno-heptose. In Pseudomonas syringae pv. syringae (strain B728a), this protein is Bifunctional protein HldE.